A 186-amino-acid chain; its full sequence is Ribosome-recycling factor (186 aa).

Belongs to the RRF family.

Its subcellular location is the cytoplasm. Responsible for the release of ribosomes from messenger RNA at the termination of protein biosynthesis. May increase the efficiency of translation by recycling ribosomes from one round of translation to another. This is Ribosome-recycling factor from Rhodopseudomonas palustris (strain ATCC BAA-98 / CGA009).